A 324-amino-acid polypeptide reads, in one-letter code: Putative S-adenosyl-L-methionine-dependent methyltransferase MUL_0818 (324 aa).

S-adenosyl-L-methionine contacts are provided by residues Asp-138 and 167 to 168 (DL).

This sequence belongs to the UPF0677 family.

In terms of biological role, exhibits S-adenosyl-L-methionine-dependent methyltransferase activity. This chain is Putative S-adenosyl-L-methionine-dependent methyltransferase MUL_0818, found in Mycobacterium ulcerans (strain Agy99).